An 881-amino-acid chain; its full sequence is Alanine--tRNA ligase (881 aa).

The Zn(2+) site is built by histidine 568, histidine 572, cysteine 670, and histidine 674.

Belongs to the class-II aminoacyl-tRNA synthetase family. It depends on Zn(2+) as a cofactor.

It is found in the cytoplasm. The catalysed reaction is tRNA(Ala) + L-alanine + ATP = L-alanyl-tRNA(Ala) + AMP + diphosphate. In terms of biological role, catalyzes the attachment of alanine to tRNA(Ala) in a two-step reaction: alanine is first activated by ATP to form Ala-AMP and then transferred to the acceptor end of tRNA(Ala). Also edits incorrectly charged Ser-tRNA(Ala) and Gly-tRNA(Ala) via its editing domain. This chain is Alanine--tRNA ligase, found in Moorella thermoacetica (strain ATCC 39073 / JCM 9320).